The following is a 196-amino-acid chain: Large ribosomal subunit protein bL9 (196 aa).

Belongs to the bacterial ribosomal protein bL9 family.

Its function is as follows. Binds to the 23S rRNA. The polypeptide is Large ribosomal subunit protein bL9 (Gluconobacter oxydans (strain 621H) (Gluconobacter suboxydans)).